Reading from the N-terminus, the 321-residue chain is Olfactory receptor 52P1 (321 aa).

Residues 1–27 (MESPNHTDVDPSVFFLLGIPGLEQFHL) are Extracellular-facing. Asn5 carries an N-linked (GlcNAc...) asparagine glycan. The chain crosses the membrane as a helical span at residues 28-48 (WLSLPVCGLGTATIVGNITIL). At 49-56 (VVVATEPV) the chain is on the cytoplasmic side. Residues 57-77 (LHKPVYLFLCMLSTIDLAASV) form a helical membrane-spanning segment. Residues 78–101 (STVPKLLAIFWCGAGHISASACLA) are Extracellular-facing. Cys99 and Cys191 are oxidised to a cystine. A helical membrane pass occupies residues 102–122 (QMFFIHAFCMMESTVLLAMAF). Residues 123–141 (DRYVAICHPLRYATILTDT) lie on the Cytoplasmic side of the membrane. The helical transmembrane segment at 142–162 (IIAHIGVAAVVRGSLLMLPCP) threads the bilayer. The Extracellular segment spans residues 163-198 (FLIGRLNFCQSHVILHTYCEHMAVVKLACGDTRPNR). A helical transmembrane segment spans residues 199 to 219 (VYGLTAALLVIGVDLFCIGLS). Residues 220–239 (YALSAQAVLRLSSHEARSKA) are Cytoplasmic-facing. The chain crosses the membrane as a helical span at residues 240–260 (LGTCGSHVCVILISYTPALFS). At 261–275 (FFTHRFGHHVPVHIH) the chain is on the extracellular side. The chain crosses the membrane as a helical span at residues 276–296 (ILLANVYLLLPPALNPVVYGV). Residues 297–315 (KTKQIRKRVVRVFQSGQGM) are Cytoplasmic-facing.

Belongs to the G-protein coupled receptor 1 family.

The protein resides in the cell membrane. In terms of biological role, odorant receptor. In Homo sapiens (Human), this protein is Olfactory receptor 52P1.